We begin with the raw amino-acid sequence, 120 residues long: Immunoglobulin kappa variable 2-29 (120 aa).

A signal peptide spans 1–20 (MRLPAQLLGLLMLWIPGSSA). The interval 21–43 (DIVMTQTPLSLSVTPGQPASISC) is framework-1. One can recognise an Ig-like domain in the interval 21 to 120 (DIVMTQTPLS…YYCMQGIHLP (100 aa)). A disulfide bridge connects residues C43 and C113. The segment at 44-59 (KSSQSLLHSDGKTYLY) is complementarity-determining-1. Residues 60-74 (WYLQKPGQSPQLLIY) are framework-2. The segment at 75 to 81 (EVSSRFS) is complementarity-determining-2. The segment at 82 to 113 (GVPDRFSGSGSGTDFTLKISRVEAEDVGVYYC) is framework-3. The complementarity-determining-3 stretch occupies residues 114-120 (MQGIHLP).

Immunoglobulins are composed of two identical heavy chains and two identical light chains; disulfide-linked.

The protein resides in the secreted. Its subcellular location is the cell membrane. Its function is as follows. V region of the variable domain of immunoglobulin light chains that participates in the antigen recognition. Immunoglobulins, also known as antibodies, are membrane-bound or secreted glycoproteins produced by B lymphocytes. In the recognition phase of humoral immunity, the membrane-bound immunoglobulins serve as receptors which, upon binding of a specific antigen, trigger the clonal expansion and differentiation of B lymphocytes into immunoglobulins-secreting plasma cells. Secreted immunoglobulins mediate the effector phase of humoral immunity, which results in the elimination of bound antigens. The antigen binding site is formed by the variable domain of one heavy chain, together with that of its associated light chain. Thus, each immunoglobulin has two antigen binding sites with remarkable affinity for a particular antigen. The variable domains are assembled by a process called V-(D)-J rearrangement and can then be subjected to somatic hypermutations which, after exposure to antigen and selection, allow affinity maturation for a particular antigen. The chain is Immunoglobulin kappa variable 2-29 from Homo sapiens (Human).